Here is a 181-residue protein sequence, read N- to C-terminus: ATP-dependent protease subunit HslV (181 aa).

The active site involves Thr-5. Na(+)-binding residues include Ser-162, Cys-165, and Thr-168.

The protein belongs to the peptidase T1B family. HslV subfamily. As to quaternary structure, a double ring-shaped homohexamer of HslV is capped on each side by a ring-shaped HslU homohexamer. The assembly of the HslU/HslV complex is dependent on binding of ATP.

Its subcellular location is the cytoplasm. It carries out the reaction ATP-dependent cleavage of peptide bonds with broad specificity.. With respect to regulation, allosterically activated by HslU binding. Its function is as follows. Protease subunit of a proteasome-like degradation complex believed to be a general protein degrading machinery. The chain is ATP-dependent protease subunit HslV from Campylobacter hominis (strain ATCC BAA-381 / DSM 21671 / CCUG 45161 / LMG 19568 / NCTC 13146 / CH001A).